The sequence spans 221 residues: Endonuclease V (221 aa).

Residues Asp-43 and Asp-109 each coordinate Mg(2+).

This sequence belongs to the endonuclease V family. The cofactor is Mg(2+).

Its subcellular location is the cytoplasm. It catalyses the reaction Endonucleolytic cleavage at apurinic or apyrimidinic sites to products with a 5'-phosphate.. In terms of biological role, DNA repair enzyme involved in the repair of deaminated bases. Selectively cleaves double-stranded DNA at the second phosphodiester bond 3' to a deoxyinosine leaving behind the intact lesion on the nicked DNA. This Petrotoga mobilis (strain DSM 10674 / SJ95) protein is Endonuclease V.